We begin with the raw amino-acid sequence, 156 residues long: Deoxyuridine 5'-triphosphate nucleotidohydrolase (156 aa).

Residues 76–78, asparagine 89, 93–95, and lysine 103 contribute to the substrate site; these read RSG and TVD.

The protein belongs to the dUTPase family. It depends on Mg(2+) as a cofactor.

The enzyme catalyses dUTP + H2O = dUMP + diphosphate + H(+). It participates in pyrimidine metabolism; dUMP biosynthesis; dUMP from dCTP (dUTP route): step 2/2. Its function is as follows. This enzyme is involved in nucleotide metabolism: it produces dUMP, the immediate precursor of thymidine nucleotides and it decreases the intracellular concentration of dUTP so that uracil cannot be incorporated into DNA. The polypeptide is Deoxyuridine 5'-triphosphate nucleotidohydrolase (Agrobacterium fabrum (strain C58 / ATCC 33970) (Agrobacterium tumefaciens (strain C58))).